A 616-amino-acid polypeptide reads, in one-letter code: Proline--tRNA ligase (616 aa).

This sequence belongs to the class-II aminoacyl-tRNA synthetase family. ProS type 1 subfamily. Homodimer.

It localises to the cytoplasm. The enzyme catalyses tRNA(Pro) + L-proline + ATP = L-prolyl-tRNA(Pro) + AMP + diphosphate. Catalyzes the attachment of proline to tRNA(Pro) in a two-step reaction: proline is first activated by ATP to form Pro-AMP and then transferred to the acceptor end of tRNA(Pro). As ProRS can inadvertently accommodate and process non-cognate amino acids such as alanine and cysteine, to avoid such errors it has two additional distinct editing activities against alanine. One activity is designated as 'pretransfer' editing and involves the tRNA(Pro)-independent hydrolysis of activated Ala-AMP. The other activity is designated 'posttransfer' editing and involves deacylation of mischarged Ala-tRNA(Pro). The misacylated Cys-tRNA(Pro) is not edited by ProRS. This Streptococcus gordonii (strain Challis / ATCC 35105 / BCRC 15272 / CH1 / DL1 / V288) protein is Proline--tRNA ligase.